We begin with the raw amino-acid sequence, 308 residues long: MKQIHVIDSHTGGEPTRLVMKGFPQLRGRSMAEQRDELRELHDRWRRACLLEPRGNDVLVGALYCPPVSADATCGVIFFNNAGYLNMCGHGTIGLVASLQHMGLITPGVHKIDTPVGQVSATLHEDGAITVANVPSYRYRQQVAVDVPGHGVVRGDIAWGGNWFFLVSEHGQRIELDNREALTEYTWAMLKALETQGVTGENGAPIDHIELFADDPNADSRNFVMCPGKAYDRSPCGTGTSAKLACLAADGKLAEGQTWVQASITGSQFHGRYARDGERIRPFITGRAYMTADSTLLIDEQDPFAWGI.

Cys88 (proton acceptor) is an active-site residue. Substrate contacts are provided by residues 89–90 (GH), His208, and Asp232. The active-site Proton donor is Cys236. 237–238 (GT) is a substrate binding site.

The protein belongs to the proline racemase family.

It catalyses the reaction trans-4-hydroxy-L-proline = cis-4-hydroxy-D-proline. Functionally, catalyzes the reversible epimerization of cis-4-hydroxy-D-proline (c4DHyp) to trans-4-hydroxy-L-proline (t4LHyp). May be involved in a degradation pathway that allows P.putida strain KT2440 to grow on either epimer of 4-hydroxyproline, c4DHyp and t4LHyp, as the sole carbon and nitrogen source. Does not exhibit measureable racemase activity in vitro with any of the 19 natural chiral amino acid enantiomers. The polypeptide is 4-hydroxyproline 2-epimerase (Pseudomonas putida (strain ATCC 47054 / DSM 6125 / CFBP 8728 / NCIMB 11950 / KT2440)).